Here is a 315-residue protein sequence, read N- to C-terminus: Neuroguidin (315 aa).

Disordered regions lie at residues 127–201 and 289–315; these read SEND…KQKR and VQDI…RKRK. Composition is skewed to basic and acidic residues over residues 159-168 and 182-200; these read KTKEQKEPSG and YDGD…EKQK. The stretch at 181 to 206 forms a coiled coil; the sequence is HYDGDLTEADRQKERVEKQKRAALRS. A compositionally biased stretch (basic residues) spans 296 to 315; that stretch reads KPKKKKIIKKGKKKVFRKRK.

It belongs to the SAS10 family. As to quaternary structure, part of the small subunit (SSU) processome, composed of more than 70 proteins and the RNA chaperone small nucleolar RNA (snoRNA) U3.

Its subcellular location is the nucleus. It is found in the nucleolus. It localises to the chromosome. The protein resides in the centromere. The protein localises to the cytoplasm. Its subcellular location is the cell projection. It is found in the axon. It localises to the dendrite. The protein resides in the filopodium. In terms of biological role, part of the small subunit (SSU) processome, first precursor of the small eukaryotic ribosomal subunit. During the assembly of the SSU processome in the nucleolus, many ribosome biogenesis factors, an RNA chaperone and ribosomal proteins associate with the nascent pre-rRNA and work in concert to generate RNA folding, modifications, rearrangements and cleavage as well as targeted degradation of pre-ribosomal RNA by the RNA exosome. Its dissociation from the complex determines the transition from state pre-A1 to state pre-A1*. May inhibit mRNA translation. The protein is Neuroguidin (ngdn) of Danio rerio (Zebrafish).